The following is an 865-amino-acid chain: Ribosome biogenesis protein BOP1 homolog (865 aa).

Disordered stretches follow at residues 1 to 195 and 207 to 240; these read MVAN…LKLG and KTRG…EEDI. 3 stretches are compositionally biased toward acidic residues: residues 30–44, 57–79, and 87–159; these read LDES…ESDY, NEGE…DDVL, and DGEE…EEEA. The span at 160-180 shows a compositional bias: basic and acidic residues; that stretch reads KENGKEKPAKAKAERKQREEQ. WD repeat units follow at residues 526–565, 567–607, 651–693, 696–734, 737–776, 780–819, and 835–865; these read GHTS…CIRT, PTGD…YMLV, THFR…SQVP, KSKG…MMKK, PGCK…KPYQ, IHNA…DLLQ, and VNDF…RLYT.

This sequence belongs to the WD repeat BOP1/ERB1 family.

Its subcellular location is the nucleus. The protein resides in the nucleolus. It is found in the nucleoplasm. Required for maturation of ribosomal RNAs and formation of the large ribosomal subunit. The sequence is that of Ribosome biogenesis protein BOP1 homolog from Anopheles gambiae (African malaria mosquito).